The sequence spans 708 residues: Ion-translocating oxidoreductase complex subunit C (708 aa).

2 consecutive 4Fe-4S ferredoxin-type domains span residues 369–397 (GEPQ…QQLY) and 407–436 (KATT…VQYF). Residues Cys-377, Cys-380, Cys-383, Cys-387, Cys-416, Cys-419, Cys-422, and Cys-426 each coordinate [4Fe-4S] cluster. Residues 663–684 (KARKLEQQQTNAEPEEQVDPRK) form a disordered region.

The protein belongs to the 4Fe4S bacterial-type ferredoxin family. RnfC subfamily. In terms of assembly, the complex is composed of six subunits: RsxA, RsxB, RsxC, RsxD, RsxE and RsxG. [4Fe-4S] cluster is required as a cofactor.

The protein localises to the cell inner membrane. Part of a membrane-bound complex that couples electron transfer with translocation of ions across the membrane. Required to maintain the reduced state of SoxR. The sequence is that of Ion-translocating oxidoreductase complex subunit C from Shigella boydii serotype 18 (strain CDC 3083-94 / BS512).